The primary structure comprises 426 residues: CinA-like protein (426 aa).

This sequence belongs to the CinA family.

The protein is CinA-like protein of Gloeobacter violaceus (strain ATCC 29082 / PCC 7421).